Consider the following 367-residue polypeptide: Cyclin-D3-2 (367 aa).

Positions 324–335 (STTASVSSSSSS) are enriched in low complexity. The segment at 324-347 (STTASVSSSSSSPEPLLKRRRVQE) is disordered.

The protein belongs to the cyclin family. Cyclin D subfamily. As to quaternary structure, interacts with CDKA-1. In terms of tissue distribution, expressed in developing vegetative and floral primordia.

Its function is as follows. Promotes divisions in the guard cells (GCs) after the guard mother cells (GMC) symmetric division when in the presence of CDKA-1. This is Cyclin-D3-2 (CYCD3-2) from Arabidopsis thaliana (Mouse-ear cress).